Consider the following 460-residue polypeptide: GTPase Der (460 aa).

EngA-type G domains follow at residues 2–164 and 196–368; these read QSII…HEEF and IRVG…ENFT. GTP contacts are provided by residues 8 to 15, 55 to 59, 116 to 119, 202 to 209, 249 to 253, and 313 to 316; these read GKPNVGKS, DSGGL, NKVD, GRVNVGKS, DTAGI, and NKWD. The 85-residue stretch at 369 to 453 folds into the KH-like domain; sequence QKIQTSKLNT…PLVIASRKKG (85 aa).

This sequence belongs to the TRAFAC class TrmE-Era-EngA-EngB-Septin-like GTPase superfamily. EngA (Der) GTPase family. As to quaternary structure, associates with the 50S ribosomal subunit.

Functionally, GTPase that plays an essential role in the late steps of ribosome biogenesis. This Campylobacter jejuni subsp. jejuni serotype O:23/36 (strain 81-176) protein is GTPase Der.